Reading from the N-terminus, the 157-residue chain is NAD(P)H-quinone oxidoreductase subunit N (157 aa).

This sequence belongs to the complex I NdhN subunit family. NDH-1 can be composed of about 15 different subunits; different subcomplexes with different compositions have been identified which probably have different functions.

The protein localises to the cellular thylakoid membrane. It catalyses the reaction a plastoquinone + NADH + (n+1) H(+)(in) = a plastoquinol + NAD(+) + n H(+)(out). The enzyme catalyses a plastoquinone + NADPH + (n+1) H(+)(in) = a plastoquinol + NADP(+) + n H(+)(out). In terms of biological role, NDH-1 shuttles electrons from an unknown electron donor, via FMN and iron-sulfur (Fe-S) centers, to quinones in the respiratory and/or the photosynthetic chain. The immediate electron acceptor for the enzyme in this species is believed to be plastoquinone. Couples the redox reaction to proton translocation, and thus conserves the redox energy in a proton gradient. Cyanobacterial NDH-1 also plays a role in inorganic carbon-concentration. This Picosynechococcus sp. (strain ATCC 27264 / PCC 7002 / PR-6) (Agmenellum quadruplicatum) protein is NAD(P)H-quinone oxidoreductase subunit N.